Reading from the N-terminus, the 280-residue chain is Large ribosomal subunit protein uL2 (280 aa).

Residues 213–280 are disordered; that stretch reads RWKGKRPSVR…RRRTGKKHAR (68 aa). A compositionally biased stretch (basic residues) spans 268–280; that stretch reads IVRRRRTGKKHAR.

Belongs to the universal ribosomal protein uL2 family. As to quaternary structure, part of the 50S ribosomal subunit. Forms a bridge to the 30S subunit in the 70S ribosome.

One of the primary rRNA binding proteins. Required for association of the 30S and 50S subunits to form the 70S ribosome, for tRNA binding and peptide bond formation. It has been suggested to have peptidyltransferase activity; this is somewhat controversial. Makes several contacts with the 16S rRNA in the 70S ribosome. This Mycobacterium leprae (strain Br4923) protein is Large ribosomal subunit protein uL2.